Consider the following 343-residue polypeptide: UDP-3-O-acylglucosamine N-acyltransferase 2 (343 aa).

Catalysis depends on His-251, which acts as the Proton acceptor.

The protein belongs to the transferase hexapeptide repeat family. LpxD subfamily. As to quaternary structure, homotrimer.

It carries out the reaction a UDP-3-O-[(3R)-3-hydroxyacyl]-alpha-D-glucosamine + a (3R)-hydroxyacyl-[ACP] = a UDP-2-N,3-O-bis[(3R)-3-hydroxyacyl]-alpha-D-glucosamine + holo-[ACP] + H(+). The protein operates within bacterial outer membrane biogenesis; LPS lipid A biosynthesis. Functionally, catalyzes the N-acylation of UDP-3-O-acylglucosamine using 3-hydroxyacyl-ACP as the acyl donor. Is involved in the biosynthesis of lipid A, a phosphorylated glycolipid that anchors the lipopolysaccharide to the outer membrane of the cell. In Legionella pneumophila (strain Lens), this protein is UDP-3-O-acylglucosamine N-acyltransferase 2.